A 142-amino-acid polypeptide reads, in one-letter code: ATP synthase epsilon chain (142 aa).

The protein belongs to the ATPase epsilon chain family. F-type ATPases have 2 components, CF(1) - the catalytic core - and CF(0) - the membrane proton channel. CF(1) has five subunits: alpha(3), beta(3), gamma(1), delta(1), epsilon(1). CF(0) has three main subunits: a, b and c.

It is found in the cell inner membrane. In terms of biological role, produces ATP from ADP in the presence of a proton gradient across the membrane. In Shewanella sp. (strain ANA-3), this protein is ATP synthase epsilon chain.